The sequence spans 186 residues: dTTP/UTP pyrophosphatase (186 aa).

D70 serves as the catalytic Proton acceptor.

It belongs to the Maf family. YhdE subfamily. A divalent metal cation is required as a cofactor.

It localises to the cytoplasm. It catalyses the reaction dTTP + H2O = dTMP + diphosphate + H(+). It carries out the reaction UTP + H2O = UMP + diphosphate + H(+). In terms of biological role, nucleoside triphosphate pyrophosphatase that hydrolyzes dTTP and UTP. May have a dual role in cell division arrest and in preventing the incorporation of modified nucleotides into cellular nucleic acids. This Vibrio vulnificus (strain CMCP6) protein is dTTP/UTP pyrophosphatase.